A 270-amino-acid chain; its full sequence is 4-hydroxy-tetrahydrodipicolinate reductase (270 aa).

NAD(+) contacts are provided by residues Gly-8–Met-13 and Glu-34. Arg-35 serves as a coordination point for NADP(+). NAD(+) is bound by residues Gly-98–Thr-100 and Ser-122–Met-125. His-155 acts as the Proton donor/acceptor in catalysis. Residue His-156 coordinates (S)-2,3,4,5-tetrahydrodipicolinate. Lys-159 serves as the catalytic Proton donor. Gly-165–Thr-166 serves as a coordination point for (S)-2,3,4,5-tetrahydrodipicolinate.

This sequence belongs to the DapB family.

Its subcellular location is the cytoplasm. The catalysed reaction is (S)-2,3,4,5-tetrahydrodipicolinate + NAD(+) + H2O = (2S,4S)-4-hydroxy-2,3,4,5-tetrahydrodipicolinate + NADH + H(+). It carries out the reaction (S)-2,3,4,5-tetrahydrodipicolinate + NADP(+) + H2O = (2S,4S)-4-hydroxy-2,3,4,5-tetrahydrodipicolinate + NADPH + H(+). The protein operates within amino-acid biosynthesis; L-lysine biosynthesis via DAP pathway; (S)-tetrahydrodipicolinate from L-aspartate: step 4/4. Its function is as follows. Catalyzes the conversion of 4-hydroxy-tetrahydrodipicolinate (HTPA) to tetrahydrodipicolinate. This chain is 4-hydroxy-tetrahydrodipicolinate reductase, found in Anaeromyxobacter dehalogenans (strain 2CP-C).